Consider the following 81-residue polypeptide: Putative defensin-like protein 102 (81 aa).

Residues 1–24 (MTTTMKTFVAFVLTVFFIMSSAHC) form the signal peptide. Disulfide bonds link Cys43/Cys78, Cys49/Cys71, Cys57/Cys76, and Cys61/Cys77.

The protein belongs to the DEFL family.

It is found in the secreted. In Arabidopsis thaliana (Mouse-ear cress), this protein is Putative defensin-like protein 102.